Reading from the N-terminus, the 150-residue chain is Protein A151R (150 aa).

It belongs to the asfivirus A151R family. In terms of assembly, monomer. Homodimer. Interacts with protein B119L. Interacts with membrane protein E248R. Requires Zn(2+) as cofactor.

May participate in a redox cascade for the formation of disulfide bonds in viral proteins. This is Protein A151R from African swine fever virus (isolate Pig/Kenya/KEN-50/1950) (ASFV).